The following is a 423-amino-acid chain: Probable WRKY transcription factor 58 (423 aa).

Disordered stretches follow at residues 91-128, 142-171, and 215-284; these read SSAH…AVHG, RNHY…DGYN, and IYKG…GVST. Low complexity-rich tracts occupy residues 99 to 111 and 144 to 162; these read QPRQ…PQRP and HYNN…VVNV. Residues 161–225 constitute a DNA-binding region (WRKY 1); it reads NVDKPADDGY…YKGQHDHERP (65 aa). Acidic residues predominate over residues 259–271; that stretch reads DDDDDDDEDDEDL. The segment at residues 300–365 is a DNA-binding region (WRKY 2); the sequence is SEVDLLDDGY…YEGKHNHDVP (66 aa).

It localises to the nucleus. Functionally, transcription factor. Interacts specifically with the W box (5'-(T)TGAC[CT]-3'), a frequently occurring elicitor-responsive cis-acting element. This chain is Probable WRKY transcription factor 58 (WRKY58), found in Arabidopsis thaliana (Mouse-ear cress).